The following is a 116-amino-acid chain: Ribonuclease P protein component (116 aa).

It belongs to the RnpA family. In terms of assembly, consists of a catalytic RNA component (M1 or rnpB) and a protein subunit.

The catalysed reaction is Endonucleolytic cleavage of RNA, removing 5'-extranucleotides from tRNA precursor.. Its function is as follows. RNaseP catalyzes the removal of the 5'-leader sequence from pre-tRNA to produce the mature 5'-terminus. It can also cleave other RNA substrates such as 4.5S RNA. The protein component plays an auxiliary but essential role in vivo by binding to the 5'-leader sequence and broadening the substrate specificity of the ribozyme. The chain is Ribonuclease P protein component from Geobacillus sp. (strain WCH70).